Reading from the N-terminus, the 583-residue chain is Aspartate--tRNA ligase (583 aa).

Glu173 serves as a coordination point for L-aspartate. The interval 197 to 200 (QLFK) is aspartate. Residue Arg219 participates in L-aspartate binding. Residues 219 to 221 (RDE) and Gln228 each bind ATP. An L-aspartate-binding site is contributed by His444. Residue Glu478 participates in ATP binding. L-aspartate is bound at residue Arg485. ATP is bound at residue 530 to 533 (GLDR).

This sequence belongs to the class-II aminoacyl-tRNA synthetase family. Type 1 subfamily. In terms of assembly, homodimer.

The protein resides in the cytoplasm. It catalyses the reaction tRNA(Asp) + L-aspartate + ATP = L-aspartyl-tRNA(Asp) + AMP + diphosphate. Its function is as follows. Catalyzes the attachment of L-aspartate to tRNA(Asp) in a two-step reaction: L-aspartate is first activated by ATP to form Asp-AMP and then transferred to the acceptor end of tRNA(Asp). The polypeptide is Aspartate--tRNA ligase (Azobacteroides pseudotrichonymphae genomovar. CFP2).